The following is a 619-amino-acid chain: DNA polymerase II small subunit (619 aa).

The segment at 78–122 (EEAEKTVESQETRASELEEGGVSQVSSGELQELKEESPEISTTEE) is disordered. Basic and acidic residues predominate over residues 79–93 (EAEKTVESQETRASE).

Belongs to the DNA polymerase delta/II small subunit family. As to quaternary structure, heterodimer of a large subunit and a small subunit.

The enzyme catalyses DNA(n) + a 2'-deoxyribonucleoside 5'-triphosphate = DNA(n+1) + diphosphate. The catalysed reaction is Exonucleolytic cleavage in the 3'- to 5'-direction to yield nucleoside 5'-phosphates.. In terms of biological role, possesses two activities: a DNA synthesis (polymerase) and an exonucleolytic activity that degrades single-stranded DNA in the 3' to 5' direction. Has a template-primer preference which is characteristic of a replicative DNA polymerase. The chain is DNA polymerase II small subunit (polB) from Pyrococcus abyssi (strain GE5 / Orsay).